Here is a 217-residue protein sequence, read N- to C-terminus: Probable cutinase 3 (217 aa).

The signal sequence occupies residues 1–17 (MSLRSLFVAGLATLALA). Disulfide bonds link Cys-39/Cys-118 and Cys-65/Cys-79. The active-site Nucleophile is the Ser-129. Cys-180 and Cys-187 are oxidised to a cystine. The active site involves Asp-184. The active-site Proton donor/acceptor is His-197.

Belongs to the cutinase family.

The protein resides in the secreted. The enzyme catalyses cutin + H2O = cutin monomers.. Its function is as follows. Catalyzes the hydrolysis of complex carboxylic polyesters found in the cell wall of plants. Degrades cutin, a macromolecule that forms the structure of the plant cuticle. The sequence is that of Probable cutinase 3 from Neosartorya fischeri (strain ATCC 1020 / DSM 3700 / CBS 544.65 / FGSC A1164 / JCM 1740 / NRRL 181 / WB 181) (Aspergillus fischerianus).